Reading from the N-terminus, the 322-residue chain is Ribose 1,5-bisphosphate isomerase (322 aa).

Residues 20 to 23 (RGAG) and R63 contribute to the substrate site. The Proton acceptor role is filled by C133. Substrate is bound at residue 135-137 (SKA). D202 acts as the Proton donor in catalysis. Substrate-binding positions include 212–213 (NK) and K238.

This sequence belongs to the eIF-2B alpha/beta/delta subunits family. R15P isomerase subfamily. In terms of assembly, homohexamer; trimer of dimers.

The catalysed reaction is alpha-D-ribose 1,5-bisphosphate = D-ribulose 1,5-bisphosphate. Its activity is regulated as follows. Is highly activated in the presence of AMP, with an increase of &gt;40-fold in activity levels. Among other nucleotides, isomerase activity is slightly increased in the presence of GMP, but CMP, UMP, TMP, and NAD(+) have no effect; therefore, AMP is likely the major activator of R15P isomerase in vivo. To a lesser extent, various compounds with an adenosyl moiety, such as dAMP, adenosine, or methylthioadenosine, can also act as activators. The regulation of this enzyme by AMP prevents excess degradation of intracellular AMP by the archaeal AMP degradation pathway. Functionally, catalyzes the isomerization of ribose 1,5-bisphosphate (R15P) to ribulose 1,5-bisphosphate (RuBP), the CO(2) acceptor and substrate for RubisCO. Only accepts the alpha-anomer of D-ribose 1,5-bisphosphate as substrate, being inactive on the beta-anomer. Displays a strict substrate specificity, since other phosphorylated sugars such as R5P, ribose, G16P, G6P, G1P, FBP, F6P, and PRPP, are not substrates. Functions in an archaeal AMP degradation pathway, together with AMP phosphorylase and RubisCO. This chain is Ribose 1,5-bisphosphate isomerase, found in Thermococcus kodakarensis (strain ATCC BAA-918 / JCM 12380 / KOD1) (Pyrococcus kodakaraensis (strain KOD1)).